The primary structure comprises 388 residues: Ferrochelatase (388 aa).

Fe cation-binding residues include His-197 and Glu-278.

The protein belongs to the ferrochelatase family.

The protein resides in the cytoplasm. The catalysed reaction is heme b + 2 H(+) = protoporphyrin IX + Fe(2+). It functions in the pathway porphyrin-containing compound metabolism; protoheme biosynthesis; protoheme from protoporphyrin-IX: step 1/1. In terms of biological role, catalyzes the ferrous insertion into protoporphyrin IX. The sequence is that of Ferrochelatase from Thermosynechococcus vestitus (strain NIES-2133 / IAM M-273 / BP-1).